A 155-amino-acid polypeptide reads, in one-letter code: SsrA-binding protein (155 aa).

This sequence belongs to the SmpB family.

It is found in the cytoplasm. In terms of biological role, required for rescue of stalled ribosomes mediated by trans-translation. Binds to transfer-messenger RNA (tmRNA), required for stable association of tmRNA with ribosomes. tmRNA and SmpB together mimic tRNA shape, replacing the anticodon stem-loop with SmpB. tmRNA is encoded by the ssrA gene; the 2 termini fold to resemble tRNA(Ala) and it encodes a 'tag peptide', a short internal open reading frame. During trans-translation Ala-aminoacylated tmRNA acts like a tRNA, entering the A-site of stalled ribosomes, displacing the stalled mRNA. The ribosome then switches to translate the ORF on the tmRNA; the nascent peptide is terminated with the 'tag peptide' encoded by the tmRNA and targeted for degradation. The ribosome is freed to recommence translation, which seems to be the essential function of trans-translation. This chain is SsrA-binding protein, found in Chelativorans sp. (strain BNC1).